We begin with the raw amino-acid sequence, 185 residues long: Ribosome-recycling factor (185 aa).

This sequence belongs to the RRF family.

It is found in the cytoplasm. Its function is as follows. Responsible for the release of ribosomes from messenger RNA at the termination of protein biosynthesis. May increase the efficiency of translation by recycling ribosomes from one round of translation to another. This is Ribosome-recycling factor from Streptococcus suis (strain 98HAH33).